The chain runs to 472 residues: F420-non-reducing hydrogenase subunit A (472 aa).

Positions 61, 64, 442, and 445 each coordinate Ni(2+).

It belongs to the [NiFe]/[NiFeSe] hydrogenase large subunit family. In terms of assembly, the F420-non-reducing hydrogenase is composed of three subunits; MvhA, MvhD and MvhG. It forms a complex with the heterodisulfide reductase (hdr). Requires Ni(2+) as cofactor.

Functionally, part of a complex that provides reducing equivalents for heterodisulfide reductase. The chain is F420-non-reducing hydrogenase subunit A (mvhA) from Methanothermobacter thermautotrophicus (strain ATCC 29096 / DSM 1053 / JCM 10044 / NBRC 100330 / Delta H) (Methanobacterium thermoautotrophicum).